An 819-amino-acid chain; its full sequence is Eukaryotic translation initiation factor 3 subunit C (819 aa).

The disordered stretch occupies residues 1 to 106 (MSRFFLKTYE…DSSDEEDGKK (106 aa)). 2 stretches are compositionally biased toward acidic residues: residues 17–41 (GEEE…ELSD) and 47–59 (DSDE…EDND). The region spanning 620–795 (FHQHINLDLI…EYIIFERGEE (176 aa)) is the PCI domain.

The protein belongs to the eIF-3 subunit C family. Component of the eukaryotic translation initiation factor 3 (eIF-3) complex.

Its subcellular location is the cytoplasm. In terms of biological role, component of the eukaryotic translation initiation factor 3 (eIF-3) complex, which is involved in protein synthesis of a specialized repertoire of mRNAs and, together with other initiation factors, stimulates binding of mRNA and methionyl-tRNAi to the 40S ribosome. The eIF-3 complex specifically targets and initiates translation of a subset of mRNAs involved in cell proliferation. This is Eukaryotic translation initiation factor 3 subunit C from Kluyveromyces lactis (strain ATCC 8585 / CBS 2359 / DSM 70799 / NBRC 1267 / NRRL Y-1140 / WM37) (Yeast).